The sequence spans 384 residues: S-adenosylmethionine synthase (384 aa).

Histidine 15 contacts ATP. Residue aspartate 17 participates in Mg(2+) binding. Glutamate 43 contacts K(+). Glutamate 56 and glutamine 99 together coordinate L-methionine. The segment at 99–109 (QSPDINQGVDR) is flexible loop. ATP contacts are provided by residues 164-166 (DAK), 231-232 (RF), aspartate 240, 246-247 (RK), alanine 263, and lysine 267. Aspartate 240 is an L-methionine binding site. Lysine 271 serves as a coordination point for L-methionine.

The protein belongs to the AdoMet synthase family. Homotetramer; dimer of dimers. Mg(2+) serves as cofactor. The cofactor is K(+).

The protein resides in the cytoplasm. The catalysed reaction is L-methionine + ATP + H2O = S-adenosyl-L-methionine + phosphate + diphosphate. It functions in the pathway amino-acid biosynthesis; S-adenosyl-L-methionine biosynthesis; S-adenosyl-L-methionine from L-methionine: step 1/1. In terms of biological role, catalyzes the formation of S-adenosylmethionine (AdoMet) from methionine and ATP. The overall synthetic reaction is composed of two sequential steps, AdoMet formation and the subsequent tripolyphosphate hydrolysis which occurs prior to release of AdoMet from the enzyme. The polypeptide is S-adenosylmethionine synthase (Shewanella piezotolerans (strain WP3 / JCM 13877)).